Reading from the N-terminus, the 151-residue chain is Putative coiled-coil-helix-coiled-coil-helix domain-containing protein CHCHD2P9, mitochondrial (151 aa).

A mitochondrion-targeting transit peptide spans 1 to 9 (MPRGSRSRT). Disordered stretches follow at residues 1-50 (MPRG…AAAP) and 75-110 (TQGHAVTGGFSGGSNAEPARPDIAYQEPQGTQPAQQ). The span at 10–26 (SRMAPPASRAPQMRAAP) shows a compositional bias: low complexity. Over residues 27–38 (RPAPVAQPPAAA) the composition is skewed to pro residues. 2 stretches are compositionally biased toward low complexity: residues 39–50 (PPSAVGSSAAAP) and 100–110 (QEPQGTQPAQQ). One can recognise a CHCH domain in the interval 111-151 (QQPCFYGIKQFLECAQNQGDIKLCEDFSKVLKQCRLAKGLA). 2 consecutive short sequence motifs (cx9C motif) follow at residues 114–124 (CFYGIKQFLEC) and 134–144 (CEDFSKVLKQC). 2 cysteine pairs are disulfide-bonded: Cys114–Cys144 and Cys124–Cys134.

The protein resides in the mitochondrion. The protein is Putative coiled-coil-helix-coiled-coil-helix domain-containing protein CHCHD2P9, mitochondrial (CHCHD2P9) of Homo sapiens (Human).